A 253-amino-acid polypeptide reads, in one-letter code: Phosphoribosylaminoimidazole-succinocarboxamide synthase (253 aa).

This sequence belongs to the SAICAR synthetase family.

It catalyses the reaction 5-amino-1-(5-phospho-D-ribosyl)imidazole-4-carboxylate + L-aspartate + ATP = (2S)-2-[5-amino-1-(5-phospho-beta-D-ribosyl)imidazole-4-carboxamido]succinate + ADP + phosphate + 2 H(+). It functions in the pathway purine metabolism; IMP biosynthesis via de novo pathway; 5-amino-1-(5-phospho-D-ribosyl)imidazole-4-carboxamide from 5-amino-1-(5-phospho-D-ribosyl)imidazole-4-carboxylate: step 1/2. This chain is Phosphoribosylaminoimidazole-succinocarboxamide synthase, found in Dinoroseobacter shibae (strain DSM 16493 / NCIMB 14021 / DFL 12).